A 178-amino-acid polypeptide reads, in one-letter code: Mediator of RNA polymerase II transcription subunit 30 (178 aa).

The segment at 1 to 22 (MSTPPLAPTGMASGPFGGPQAQ) is disordered. S2 is modified (N-acetylserine). Residues 134–173 (FASEERREIVEVNKKLKQKNQQLKQIMDQLRNLIWDINAM) are a coiled coil.

Belongs to the Mediator complex subunit 30 family. As to quaternary structure, component of the Mediator complex, which is composed of MED1, MED4, MED6, MED7, MED8, MED9, MED10, MED11, MED12, MED13, MED13L, MED14, MED15, MED16, MED17, MED18, MED19, MED20, MED21, MED22, MED23, MED24, MED25, MED26, MED27, MED29, MED30, MED31, CCNC, CDK8 and CDC2L6/CDK11. The MED12, MED13, CCNC and CDK8 subunits form a distinct module termed the CDK8 module. Mediator containing the CDK8 module is less active than Mediator lacking this module in supporting transcriptional activation. Individual preparations of the Mediator complex lacking one or more distinct subunits have been variously termed ARC, CRSP, DRIP, PC2, SMCC and TRAP.

Its subcellular location is the nucleus. In terms of biological role, component of the Mediator complex, a coactivator involved in the regulated transcription of nearly all RNA polymerase II-dependent genes. Mediator functions as a bridge to convey information from gene-specific regulatory proteins to the basal RNA polymerase II transcription machinery. Mediator is recruited to promoters by direct interactions with regulatory proteins and serves as a scaffold for the assembly of a functional preinitiation complex with RNA polymerase II and the general transcription factors. This Mus musculus (Mouse) protein is Mediator of RNA polymerase II transcription subunit 30 (Med30).